Reading from the N-terminus, the 662-residue chain is DCC-interacting protein 13-beta (662 aa).

A required for RAB5A binding region spans residues methionine 1 to valine 428. Residues alanine 3 to valine 268 enclose the BAR domain. A PH domain is found at leucine 277–arginine 375. In terms of domain architecture, PID spans serine 486–aspartate 635. The segment at asparagine 642–alanine 662 is disordered.

In terms of assembly, homodimer. Homotetramer. Binds RAB5A/Rab5 through an N-terminal domain. This interaction is essential for its recruitment to endosomal membranes as well as its role in cell proliferation. Binds subunits of the NuRD/MeCP1 complex. Interacts with FSHR; interaction is independent of follicle stimulating hormone stimulation. Interacts with APPL1; the interaction is decreased by adiponectin in a time-dependent manner. Forms a complex comprising APPL1, RUVBL2, CTNNB1, HDAC1 and HDAC2; interaction reduces interaction between CTNNB1, HDAC1, HDAC2 and RUVBL2 leading to the decrease of deacetylase activity of this complex; affects the recruitment of repressive complexes to the Wnt target genes. Interacts (via BAR domain) with TBC1D1; interaction is dependent of TBC1D1 phosphorylation at 'Ser-235'; interaction diminishes the phosphorylation of TBC1D1 at 'Thr-596', resulting in inhibition of SLC2A4 translocation and glucose uptake. Interacts with ANXA2; targets APPL2 to endosomes and acting in parallel to RAB5A. Interacts with RAB31 (in GTP-bound form); interaction contributes to or enhances recruitment of APPL2 to the phagosomes; interaction enhances Fc-gamma receptor-mediated phagocytosis through PI3K/Akt signaling in macrophages. Interacts with PIK3R1; forms a complex with PIK3R1 and APPL1. Interacts (via BAR domain) with ADIPOR1; hinders the accessibility of APPL1 to ADIPOR1; negatively regulates adiponectin signaling; ADIPOQ dissociates this interaction and facilitates the recruitment of APPL1 to ADIPOR1. Interacts (via BAR domain) with ADIPOR2; ADIPOQ dissociates this interaction. In terms of tissue distribution, expressed in insulin-target tissues including skeletal muscle, liver, fat, and brain. Highly expressed in kidney and pancreas. Abundantly expressed in the ventromedial hypothalamus (VMH), barely detectable in the arcuate nucleus (ARC) and paraventricular nucleus (PVN) of the hypothalamus. Also expressed in pancreatic beta-cells.

The protein resides in the early endosome membrane. Its subcellular location is the nucleus. It is found in the cell membrane. The protein localises to the endosome membrane. It localises to the cytoplasm. The protein resides in the cytoplasmic vesicle. Its subcellular location is the phagosome. It is found in the cell projection. The protein localises to the ruffle. It localises to the ruffle membrane. The protein resides in the phagosome membrane. Its function is as follows. Multifunctional adapter protein that binds to various membrane receptors, nuclear factors and signaling proteins to regulate many processes, such as cell proliferation, immune response, endosomal trafficking and cell metabolism. Regulates signaling pathway leading to cell proliferation through interaction with RAB5A and subunits of the NuRD/MeCP1 complex. Plays a role in immune response by modulating phagocytosis, inflammatory and innate immune responses. In macrophages, enhances Fc-gamma receptor-mediated phagocytosis through interaction with RAB31 leading to activation of PI3K/Akt signaling. In response to LPS, modulates inflammatory responses by playing a key role on the regulation of TLR4 signaling and in the nuclear translocation of RELA/NF-kappa-B p65 and the secretion of pro- and anti-inflammatory cytokines. Also functions as a negative regulator of innate immune response via inhibition of AKT1 signaling pathway by forming a complex with APPL1 and PIK3R1. Plays a role in endosomal trafficking of TGFBR1 from the endosomes to the nucleus. Plays a role in cell metabolism by regulating adiponectin and insulin signaling pathways and adaptative thermogenesis. In muscle, negatively regulates adiponectin-simulated glucose uptake and fatty acid oxidation by inhibiting adiponectin signaling pathway through APPL1 sequestration thereby antagonizing APPL1 action. In muscles, negatively regulates insulin-induced plasma membrane recruitment of GLUT4 and glucose uptake through interaction with TBC1D1. Plays a role in cold and diet-induced adaptive thermogenesis by activating ventromedial hypothalamus (VMH) neurons throught AMPK inhibition which enhances sympathetic outflow to subcutaneous white adipose tissue (sWAT), sWAT beiging and cold tolerance. Also plays a role in other signaling pathways namely Wnt/beta-catenin, HGF and glucocorticoid receptor signaling. Positive regulator of beta-catenin/TCF-dependent transcription through direct interaction with RUVBL2/reptin resulting in the relief of RUVBL2-mediated repression of beta-catenin/TCF target genes by modulating the interactions within the beta-catenin-reptin-HDAC complex. May affect adult neurogenesis in hippocampus and olfactory system via regulating the sensitivity of glucocorticoid receptor. Required for fibroblast migration through HGF cell signaling. This Mus musculus (Mouse) protein is DCC-interacting protein 13-beta.